A 212-amino-acid chain; its full sequence is Imidazole glycerol phosphate synthase subunit HisH (212 aa).

A Glutamine amidotransferase type-1 domain is found at Met-1–Lys-211. Cys-79 functions as the Nucleophile in the catalytic mechanism. Residues His-186 and Glu-188 contribute to the active site.

Heterodimer of HisH and HisF.

Its subcellular location is the cytoplasm. The enzyme catalyses 5-[(5-phospho-1-deoxy-D-ribulos-1-ylimino)methylamino]-1-(5-phospho-beta-D-ribosyl)imidazole-4-carboxamide + L-glutamine = D-erythro-1-(imidazol-4-yl)glycerol 3-phosphate + 5-amino-1-(5-phospho-beta-D-ribosyl)imidazole-4-carboxamide + L-glutamate + H(+). The catalysed reaction is L-glutamine + H2O = L-glutamate + NH4(+). It participates in amino-acid biosynthesis; L-histidine biosynthesis; L-histidine from 5-phospho-alpha-D-ribose 1-diphosphate: step 5/9. In terms of biological role, IGPS catalyzes the conversion of PRFAR and glutamine to IGP, AICAR and glutamate. The HisH subunit catalyzes the hydrolysis of glutamine to glutamate and ammonia as part of the synthesis of IGP and AICAR. The resulting ammonia molecule is channeled to the active site of HisF. This is Imidazole glycerol phosphate synthase subunit HisH from Bacillus licheniformis (strain ATCC 14580 / DSM 13 / JCM 2505 / CCUG 7422 / NBRC 12200 / NCIMB 9375 / NCTC 10341 / NRRL NRS-1264 / Gibson 46).